A 760-amino-acid polypeptide reads, in one-letter code: 5-methyltetrahydropteroyltriglutamate--homocysteine methyltransferase (760 aa).

Residues 17–20 and Lys118 each bind 5-methyltetrahydropteroyltri-L-glutamate; that span reads RELK. L-homocysteine contacts are provided by residues 436-438 and Glu489; that span reads IGS. Residues 436–438 and Glu489 each bind L-methionine; that span reads IGS. 5-methyltetrahydropteroyltri-L-glutamate-binding positions include 520–521 and Trp566; that span reads RC. Asp604 provides a ligand contact to L-homocysteine. An L-methionine-binding site is contributed by Asp604. 5-methyltetrahydropteroyltri-L-glutamate is bound at residue Glu610. Residues His646, Cys648, and Glu670 each contribute to the Zn(2+) site. His699 (proton donor) is an active-site residue. Zn(2+) is bound at residue Cys731.

The protein belongs to the vitamin-B12 independent methionine synthase family. Requires Zn(2+) as cofactor.

The catalysed reaction is 5-methyltetrahydropteroyltri-L-glutamate + L-homocysteine = tetrahydropteroyltri-L-glutamate + L-methionine. Its pathway is amino-acid biosynthesis; L-methionine biosynthesis via de novo pathway; L-methionine from L-homocysteine (MetE route): step 1/1. In terms of biological role, catalyzes the transfer of a methyl group from 5-methyltetrahydrofolate to homocysteine resulting in methionine formation. The protein is 5-methyltetrahydropteroyltriglutamate--homocysteine methyltransferase of Vibrio harveyi (Beneckea harveyi).